Consider the following 425-residue polypeptide: UPF0597 protein VP2173 (425 aa).

Belongs to the UPF0597 family.

The polypeptide is UPF0597 protein VP2173 (Vibrio parahaemolyticus serotype O3:K6 (strain RIMD 2210633)).